The chain runs to 406 residues: Succinylornithine transaminase (406 aa).

K252 is modified (N6-(pyridoxal phosphate)lysine).

Belongs to the class-III pyridoxal-phosphate-dependent aminotransferase family. AstC subfamily. Requires pyridoxal 5'-phosphate as cofactor.

It catalyses the reaction N(2)-succinyl-L-ornithine + 2-oxoglutarate = N-succinyl-L-glutamate 5-semialdehyde + L-glutamate. Its pathway is amino-acid degradation; L-arginine degradation via AST pathway; L-glutamate and succinate from L-arginine: step 3/5. Catalyzes the transamination of N(2)-succinylornithine and alpha-ketoglutarate into N(2)-succinylglutamate semialdehyde and glutamate. Can also act as an acetylornithine aminotransferase. The chain is Succinylornithine transaminase from Citrobacter koseri (strain ATCC BAA-895 / CDC 4225-83 / SGSC4696).